The sequence spans 328 residues: MGATGDTEQPRGPGGAERGGLELGDAGAAGQPVLTNPWNIMIKHRQVQRRGRRSQMTTSFTDPAISMDLLRAVLQPSINEEIQGVFNKYMKFFQKAALNVRDNVGEEVDAEQLIQEACRSCLEQAKLLFSDGEKVIPRLAHELPGIKRGRQAEEESHRGSPIPKKRKGRPPGHVLSNDRAAAGMVWKQKSCEPIRREGPKWDPARLNESTTFVLGSRANKALGMGGTRGRIYIKHPHLFKYAADPQDKHWLAEQHHMRATGGKMAYLLIEEDIRDLAASDDYRGCLDLKLEELKSFVLPSWMVEKMRKYMETLRTENEHRAAEAPPQT.

Disordered stretches follow at residues M1–G30 and E142–S176. Residues G12 to E22 are compositionally biased toward gly residues. Positions M56–K147 are important for dimerization. Residues E142–R158 show a composition bias toward basic and acidic residues. A DNA-binding region (a.T hook) is located at residues R158 to G172. Position 160 is a phosphoserine (S160). The Nuclear localization signal signature appears at P163–R169. The interval R196–T315 is important for DNA and nucleosome binding. Positions G215–P236 form a DNA-binding region, H-T-H motif.

In terms of assembly, monomer and homodimer. A minor proportion may form homotrimers. Interacts with ZNF541. Interacts with the terminal deoxynucleotidyltransferase DNTT. Interacts with TRERF1. Identified in a histone deacetylase complex that contains DNTTIP1, HDAC1 and MIDEAS; this complex assembles into a tetramer that contains four copies of each protein chain. Component of a histone deacetylase complex containing DNTTIP1, ZNF541, HDAC1 and HDAC2. Identified in a complex with KCTD19, HDAC1, HDAC2 and ZNF541.

The protein localises to the nucleus. Its function is as follows. Increases DNTT terminal deoxynucleotidyltransferase activity (in vitro). Also acts as a transcriptional regulator, binding to the consensus sequence 5'-GNTGCATG-3' following an AT-tract. Associates with RAB20 promoter and positively regulates its transcription. Binds DNA and nucleosomes; may recruit HDAC1 complexes to nucleosomes or naked DNA. This chain is Deoxynucleotidyltransferase terminal-interacting protein 1 (Dnttip1), found in Mus musculus (Mouse).